A 196-amino-acid chain; its full sequence is Potassium-transporting ATPase KdpC subunit (196 aa).

A helical transmembrane segment spans residues 7-27 (PAIVSAGLFTVLLGLAYPLAV).

It belongs to the KdpC family. The system is composed of three essential subunits: KdpA, KdpB and KdpC.

Its subcellular location is the cell inner membrane. In terms of biological role, part of the high-affinity ATP-driven potassium transport (or Kdp) system, which catalyzes the hydrolysis of ATP coupled with the electrogenic transport of potassium into the cytoplasm. This subunit acts as a catalytic chaperone that increases the ATP-binding affinity of the ATP-hydrolyzing subunit KdpB by the formation of a transient KdpB/KdpC/ATP ternary complex. The protein is Potassium-transporting ATPase KdpC subunit of Caulobacter sp. (strain K31).